The sequence spans 502 residues: MKIAVIGAGVTGLAAAARIASQGHEVTIFEKNNNVGGRMNQLKKDGFTFDMGPTIVMMPDVYKDVFTACGKNYEDYIELRQLRYIYDVYFDHDDRITVPTDLAELQQMLESIEPGSTHGFMSFLTDVYKKYEIARRYFLERTYRKPSDFYNMTSLVQGAKLKTLNHADQLIEHYIDNEKIQKLLAFQTLYIGIDPKRGPSLYSIIPMIEMMFGVHFIKGGMYGMAQGLAQLNKDLGVNIELNAEIEQIIIDPKFKRADAIKVNGDIRKFDKILCTADFPSVAESLMPDFAPIKKYPPHKIADLDYSCSAFLMYIGIDIDVTDQVRLHNVIFSDDFRGNIEEIFEGRLSYDPSIYVYVPAVADKSLAPEGKTGIYVLMPTPELKTGSGIDWSDEALTQQIKEIIYRKLATIEVFEDIKSHIVSETIFTPNDFEQTYHAKFGSAFGLMPTLAQSNYYRPQNVSRDYKDLYFAGASTHPGAGVPIVLTSAKITVDEMIKDIERGV.

Residue 5–17 (VIGAGVTGLAAAA) coordinates FAD.

Belongs to the carotenoid/retinoid oxidoreductase family. CrtN subfamily.

It carries out the reaction 15-cis-4,4'-diapophytoene + 3 FAD + 3 H(+) = all-trans-4,4'-diaponeurosporene + 3 FADH2. Its pathway is carotenoid biosynthesis; staphyloxanthin biosynthesis; staphyloxanthin from farnesyl diphosphate: step 2/5. In terms of biological role, involved in the biosynthesis of the yellow-orange carotenoid staphyloxanthin, which plays a role in the virulence via its protective function against oxidative stress. Catalyzes three successive dehydrogenation reactions that lead to the introduction of three double bonds into 4,4'-diapophytoene (dehydrosqualene), with 4,4'-diapophytofluene and 4,4'-diapo-zeta-carotene as intermediates, and 4,4'-diaponeurosporene (the major deep-yellow pigment in staphylococci strains) as the end product. The sequence is that of 4,4'-diapophytoene desaturase (4,4'-diaponeurosporene-forming) from Staphylococcus aureus (strain USA300).